The sequence spans 170 residues: MDLKKYIYDIPDFPSPGIIFRDITPLLQNPETFRRTVELLAEKVVDLRPTHVVAIESRGFMFGAPLAYKLGLGFVPVRKEGKLPRESISVSYDLEYGNNTLEIHTDALKPGDRVVIVDDVLATGGTMKATVELCERLGAKVEALLFVIELLALEGRKKLTGKKVISLVQY.

Belongs to the purine/pyrimidine phosphoribosyltransferase family. In terms of assembly, homodimer.

Its subcellular location is the cytoplasm. The enzyme catalyses AMP + diphosphate = 5-phospho-alpha-D-ribose 1-diphosphate + adenine. Its pathway is purine metabolism; AMP biosynthesis via salvage pathway; AMP from adenine: step 1/1. Its function is as follows. Catalyzes a salvage reaction resulting in the formation of AMP, that is energically less costly than de novo synthesis. The polypeptide is Adenine phosphoribosyltransferase (Carboxydothermus hydrogenoformans (strain ATCC BAA-161 / DSM 6008 / Z-2901)).